We begin with the raw amino-acid sequence, 883 residues long: Chromatin structure-remodeling complex protein RSC30 (883 aa).

The segment at residues 14–45 (ACTQCRKRKIGCDRAKPICGNCVKYNKPDCFY) is a DNA-binding region (zn(2)-C6 fungal-type). 2 disordered regions span residues 121-157 (QNNN…DVPS) and 241-273 (NTTA…TSRT). Residues 130–149 (APRQNSSTVSSNVHGNTIVR) show a composition bias toward polar residues. Residue Ser-150 is modified to Phosphoserine. Polar residues predominate over residues 241–251 (NTTANKINKTG). The span at 252–270 (ENSKKGKVDGKRAGFDHQT) shows a compositional bias: basic and acidic residues.

In terms of assembly, forms a heteromer with RSC3. Interacts with NPL6. Component of the two forms of the RSC complex composed of at least either RSC1 or RSC2, and ARP7, ARP9, LDB7, NPL6, RSC3, RSC30, RSC4, RSC58, RSC6, RSC8, RSC9, SFH1, STH1, HTL1 and probably RTT102. The complexes interact with histone and histone variant components of centromeric chromatin. Component of a fungal-specific module (HTL1-LDB7-NPL6-RSC3-RSC30) within the RSC complex.

The protein localises to the nucleus. Component of the chromatin structure-remodeling complex (RSC), which is involved in transcription regulation and nucleosome positioning. RSC is responsible for the transfer of a histone octamer from a nucleosome core particle to naked DNA. The reaction requires ATP and involves an activated RSC-nucleosome intermediate. Remodeling reaction also involves DNA translocation, DNA twist and conformational change. As a reconfigurer of centromeric and flanking nucleosomes, RSC complex is required both for proper kinetochore function in chromosome segregation and, via a PKC1-dependent signaling pathway, for organization of the cellular cytoskeleton. This subunit is required for transcription of ribosomal protein genes and genes involved in the integrity of the cell wall. Together with HTL1, LDB7, NPL6, RSC3 components, defines a fungal-specific module within the RSC complex that plays a role in many cellular functions including the maintenance of cell wall integrity. This Saccharomyces cerevisiae (strain ATCC 204508 / S288c) (Baker's yeast) protein is Chromatin structure-remodeling complex protein RSC30 (RSC30).